The sequence spans 616 residues: Chaperone protein HtpG (616 aa).

Residues 1–333 are a; substrate-binding; sequence MKKQFDTEVN…CQDLPLNVSR (333 aa). The b stretch occupies residues 334-542; it reads EILQQNKILS…SNDPTYQMQK (209 aa). The interval 543–616 is c; it reads IMLSMGQEVK…INEFLEKDLL (74 aa).

This sequence belongs to the heat shock protein 90 family. In terms of assembly, homodimer.

The protein localises to the cytoplasm. In terms of biological role, molecular chaperone. Has ATPase activity. This chain is Chaperone protein HtpG, found in Borreliella afzelii (strain PKo) (Borrelia afzelii).